Consider the following 135-residue polypeptide: HTH-type transcriptional repressor RghR (135 aa).

The HTH cro/C1-type domain occupies 8-63; the sequence is LRALREERKLTVNQLATYSGVSAAGISRIENGKRGVPKPATIKKLAEALKIPYEGL. Residues 19-38 constitute a DNA-binding region (H-T-H motif); sequence VNQLATYSGVSAAGISRIEN.

Functionally, represses the expression of yvaM and both rapG and rapH. Binds directly to the promoter regions of yvaM, rapG and rapH. This Bacillus subtilis (strain 168) protein is HTH-type transcriptional repressor RghR (rghR).